A 615-amino-acid chain; its full sequence is RNA polymerase sigma factor RpoD (615 aa).

The tract at residues G166–P216 is disordered. Positions D194–S212 are enriched in acidic residues. Residues M381–T451 form a sigma-70 factor domain-2 region. The Interaction with polymerase core subunit RpoC motif lies at D405–Q408. The sigma-70 factor domain-3 stretch occupies residues E460 to V536. Positions V549–H602 are sigma-70 factor domain-4. Positions L575–A594 form a DNA-binding region, H-T-H motif.

It belongs to the sigma-70 factor family. RpoD/SigA subfamily. In terms of assembly, interacts transiently with the RNA polymerase catalytic core.

Its subcellular location is the cytoplasm. Sigma factors are initiation factors that promote the attachment of RNA polymerase to specific initiation sites and are then released. This sigma factor is the primary sigma factor during exponential growth. The sequence is that of RNA polymerase sigma factor RpoD from Pseudomonas protegens (strain DSM 19095 / LMG 27888 / CFBP 6595 / CHA0).